Reading from the N-terminus, the 252-residue chain is Adenosylcobinamide-GDP ribazoletransferase (252 aa).

7 consecutive transmembrane segments (helical) span residues 4-24 (LLLL…LPYI), 35-55 (LVPM…GGMN), 65-85 (SALV…DGAM), 102-122 (VMAD…ILLL), 178-198 (LLPG…VNNH), 201-221 (LITV…AAWF), and 232-252 (TYGA…TILT).

This sequence belongs to the CobS family. Mg(2+) is required as a cofactor.

Its subcellular location is the cell inner membrane. The catalysed reaction is alpha-ribazole + adenosylcob(III)inamide-GDP = adenosylcob(III)alamin + GMP + H(+). It catalyses the reaction alpha-ribazole 5'-phosphate + adenosylcob(III)inamide-GDP = adenosylcob(III)alamin 5'-phosphate + GMP + H(+). Its pathway is cofactor biosynthesis; adenosylcobalamin biosynthesis; adenosylcobalamin from cob(II)yrinate a,c-diamide: step 7/7. In terms of biological role, joins adenosylcobinamide-GDP and alpha-ribazole to generate adenosylcobalamin (Ado-cobalamin). Also synthesizes adenosylcobalamin 5'-phosphate from adenosylcobinamide-GDP and alpha-ribazole 5'-phosphate. This Trichormus variabilis (strain ATCC 29413 / PCC 7937) (Anabaena variabilis) protein is Adenosylcobinamide-GDP ribazoletransferase.